We begin with the raw amino-acid sequence, 123 residues long: Large ribosomal subunit protein uL29x (123 aa).

This sequence belongs to the universal ribosomal protein uL29 family.

This is Large ribosomal subunit protein uL29x (RPL35C) from Arabidopsis thaliana (Mouse-ear cress).